Here is a 516-residue protein sequence, read N- to C-terminus: uncharacterized protein (516 aa).

This is an uncharacterized protein from Azotobacter chroococcum mcd 1.